The sequence spans 414 residues: Probable cytochrome P450 127A1 (414 aa).

Cys364 lines the heme pocket.

Belongs to the cytochrome P450 family. It depends on heme as a cofactor.

Functionally, cytochromes P450 are a group of heme-thiolate monooxygenases. They oxidize a variety of structurally unrelated compounds, including steroids, fatty acids, and xenobiotics. The polypeptide is Probable cytochrome P450 127A1 (cyp127A1) (Sinorhizobium fredii (strain NBRC 101917 / NGR234)).